A 517-amino-acid polypeptide reads, in one-letter code: MAGGVIVANDGDGSAVDHGGRLTFSVVITCLVAASGGLIFGYDVGISGGVSTMEPFLRRFFPGVVRRMAEARPGNEYCVYDSQALTAFTSSLYVAGLVASLVASRVTRAMGRQAVMVMGGALFFAGGAVTGFAVNIAMLIVGRMLLGFGVGFTNQAAPLFLAEMAPTRWRGSLTAGFQFFLAVGVVIATVTNYFASRVPWGWRLSLGLAGAPAVVIFLGALFLTDTPSSLVMRGDTARARAALLRVRGAGADVEAELKGIVRAVEVARQGEDGAFRRMAARREYRPYLVFAVAMPMFFQLTGVIVISFFSPLVFRTVGFGSNAALMGNVILGAVNLVCLMLSTLVIDRYGRKVLFMVGGAIMIIAQVGVAWIMGAQVGKNGSEAMARPYAVAVVAFTCLHTAGFGWSWGPLGWVIPGEIFPVDIRSAGQAMNVSIGLGLTFVQTQSFLAMLCRFRYGTFAYYAAWVAVMTVFIAVFLPETKGVPLESMATVWARHWYWKRFAREQPKTSADEPTGTY.

Residues 1–25 (MAGGVIVANDGDGSAVDHGGRLTFS) are Cytoplasmic-facing. A helical transmembrane segment spans residues 26–46 (VVITCLVAASGGLIFGYDVGI). Residues 47-83 (SGGVSTMEPFLRRFFPGVVRRMAEARPGNEYCVYDSQ) lie on the Extracellular side of the membrane. The helical transmembrane segment at 84–104 (ALTAFTSSLYVAGLVASLVAS) threads the bilayer. Residues 105–120 (RVTRAMGRQAVMVMGG) lie on the Cytoplasmic side of the membrane. Residues 121–141 (ALFFAGGAVTGFAVNIAMLIV) form a helical membrane-spanning segment. Residues 142 to 143 (GR) are Extracellular-facing. Residues 144-164 (MLLGFGVGFTNQAAPLFLAEM) form a helical membrane-spanning segment. The Cytoplasmic portion of the chain corresponds to 165–170 (APTRWR). Residues 171–191 (GSLTAGFQFFLAVGVVIATVT) form a helical membrane-spanning segment. At 192–203 (NYFASRVPWGWR) the chain is on the extracellular side. Residues 204 to 224 (LSLGLAGAPAVVIFLGALFLT) traverse the membrane as a helical segment. The Cytoplasmic portion of the chain corresponds to 225 to 288 (DTPSSLVMRG…AARREYRPYL (64 aa)). The helical transmembrane segment at 289–309 (VFAVAMPMFFQLTGVIVISFF) threads the bilayer. At 310-325 (SPLVFRTVGFGSNAAL) the chain is on the extracellular side. The chain crosses the membrane as a helical span at residues 326–346 (MGNVILGAVNLVCLMLSTLVI). Over 347 to 352 (DRYGRK) the chain is Cytoplasmic. A helical transmembrane segment spans residues 353 to 373 (VLFMVGGAIMIIAQVGVAWIM). At 374–389 (GAQVGKNGSEAMARPY) the chain is on the extracellular side. A helical transmembrane segment spans residues 390–410 (AVAVVAFTCLHTAGFGWSWGP). The Cytoplasmic segment spans residues 411–430 (LGWVIPGEIFPVDIRSAGQA). Residues 431 to 451 (MNVSIGLGLTFVQTQSFLAML) form a helical membrane-spanning segment. Residues 452–456 (CRFRY) lie on the Extracellular side of the membrane. Residues 457–477 (GTFAYYAAWVAVMTVFIAVFL) traverse the membrane as a helical segment. Residues 478 to 517 (PETKGVPLESMATVWARHWYWKRFAREQPKTSADEPTGTY) lie on the Cytoplasmic side of the membrane.

It belongs to the major facilitator superfamily. Sugar transporter (TC 2.A.1.1) family.

The protein localises to the membrane. In terms of biological role, mediates active uptake of hexoses by sugar:proton symport. This Oryza sativa subsp. japonica (Rice) protein is Sugar transport protein MST1.